The following is a 50-amino-acid chain: Defensin-like protein 1 (50 aa).

4 cysteine pairs are disulfide-bonded: cysteine 2/cysteine 50, cysteine 14/cysteine 35, cysteine 20/cysteine 44, and cysteine 24/cysteine 46.

Belongs to the DEFL family.

It localises to the secreted. Functionally, possesses antimicrobial activity sensitive to inorganic cations. Binds specifically to the fungal plasma membrane. Has no inhibitory effect on insect gut alpha-amylase. The chain is Defensin-like protein 1 from Aesculus hippocastanum (Horse chestnut).